The chain runs to 564 residues: Probable diguanylate cyclase DgcQ (564 aa).

The next 2 membrane-spanning stretches (helical) occupy residues 20–40 and 360–380; these read LGPGHIVNLCFIVVLLFSTLL and IALTLLWALFTTMLLISWYVI. Residues 428–563 enclose the GGDEF domain; sequence HPFSVIQVDL…GRNRVFASDN (136 aa). Residue Asp436 coordinates Mg(2+). Substrate contacts are provided by Asn444, His449, and Asp453. Glu479 contributes to the Mg(2+) binding site. The active-site Proton acceptor is Glu479.

Homodimer. Mg(2+) is required as a cofactor.

Its subcellular location is the cell inner membrane. The enzyme catalyses 2 GTP = 3',3'-c-di-GMP + 2 diphosphate. It participates in glycan metabolism; bacterial cellulose biosynthesis. It functions in the pathway purine metabolism; 3',5'-cyclic di-GMP biosynthesis. Its function is as follows. Catalyzes the synthesis of cyclic-di-GMP (c-di-GMP) via the condensation of 2 GTP molecules. Cyclic-di-GMP is a second messenger which controls cell surface-associated traits in bacteria. Involved in the regulation of cellulose production. The polypeptide is Probable diguanylate cyclase DgcQ (Escherichia coli O157:H7).